The following is a 551-amino-acid chain: Putative transport protein HI_0035 (551 aa).

5 consecutive transmembrane segments (helical) span residues 4–24 (IAITISLLALVAVIGLWIGHW), 28–48 (GVGLGIGGVLFGGIIVAHFTN), 65–85 (FGLILFVYTIGIQVGPGFFSS), 95–115 (AFAILIILLGSIAVVLVHKIA), and 157–177 (VSYAMAYPFGICGILLAMWLI). RCK C-terminal domains are found at residues 191–275 (RFNA…IIGH) and 277–360 (VDAP…VIGN). The next 6 helical transmembrane spans lie at 370-390 (MLPVFIGIGLGVLVGSIPFYI), 402-424 (AGGPLVVALILARIGTIGKLYWF), 438-458 (IVLFLAVVGLKSGGSFFDTLV), 463-483 (LEWMGYGIFITFVPLIIVGTI), 492-512 (YLTICGLLAGSMTDPPALAFA), and 529-549 (VYPLVMFLRIMSPQLLAVLLW).

It belongs to the AAE transporter (TC 2.A.81) family. YidE subfamily.

It is found in the cell membrane. In Haemophilus influenzae (strain ATCC 51907 / DSM 11121 / KW20 / Rd), this protein is Putative transport protein HI_0035.